A 662-amino-acid polypeptide reads, in one-letter code: Interleukin-12 receptor subunit beta-1 (662 aa).

Positions 1–23 (MEPLVTWVVPLLFLFLLSRQGAA) are cleaved as a signal peptide. The Extracellular portion of the chain corresponds to 24 to 545 (CRTSECCFQD…RFSIEVQVSD (522 aa)). Fibronectin type-III domains are found at residues 46-136 (GPRD…LYNS), 142-234 (PLGD…VPPE), 237-337 (PQPQ…IPAD), 338-444 (THTE…GNAS), and 448-542 (TPHH…IEVQ). Cys52 and Cys62 are oxidised to a cystine. Asn121 carries N-linked (GlcNAc...) asparagine glycosylation. The WSXWS motif signature appears at 222 to 226 (WSKWS). N-linked (GlcNAc...) asparagine glycosylation is found at Asn329, Asn346, Asn352, Asn442, and Asn456. A helical membrane pass occupies residues 546-570 (WLIFFASLGSFLSILLVGVLGYLGL). Residues 571 to 662 (NRAARHLCPP…EDGDRCKAKM (92 aa)) lie on the Cytoplasmic side of the membrane. A Box 1 motif motif is present at residues 577 to 585 (LCPPLPTPC). The segment covering 626-637 (GERTEPLEKTEL) has biased composition (basic and acidic residues). Positions 626–648 (GERTEPLEKTELPEGAPELALDT) are disordered.

This sequence belongs to the type I cytokine receptor family. Type 2 subfamily. As to quaternary structure, dimer or oligomer; disulfide-linked. Interacts with IL12RB2 to form the high affinity IL12 receptor. Heterodimer with IL23R; in presence of IL23. The heterodimer forms the IL23 receptor.

It is found in the membrane. In terms of biological role, functions as an interleukin receptor which binds interleukin-12 with low affinity and is involved in IL12 transduction. Associated with IL12RB2 it forms a functional, high affinity receptor for IL12. Also associates with IL23R to form the interleukin-23 receptor which functions in IL23 signal transduction probably through activation of the Jak-Stat signaling cascade. The chain is Interleukin-12 receptor subunit beta-1 (IL12RB1) from Homo sapiens (Human).